A 70-amino-acid chain; its full sequence is Small ribosomal subunit protein bS21 (70 aa).

This sequence belongs to the bacterial ribosomal protein bS21 family.

The polypeptide is Small ribosomal subunit protein bS21 (Campylobacter curvus (strain 525.92)).